Consider the following 409-residue polypeptide: Argininosuccinate synthase (409 aa).

Residues 16-24 and A44 contribute to the ATP site; that span reads AYSGGLDTS. The L-citrulline site is built by Y96 and S101. ATP is bound at residue G126. L-aspartate contacts are provided by T128, N132, and D133. N132 contributes to the L-citrulline binding site. L-citrulline contacts are provided by R136, S185, S194, E270, and Y282.

It belongs to the argininosuccinate synthase family. Type 1 subfamily. As to quaternary structure, homotetramer.

It is found in the cytoplasm. It catalyses the reaction L-citrulline + L-aspartate + ATP = 2-(N(omega)-L-arginino)succinate + AMP + diphosphate + H(+). It functions in the pathway amino-acid biosynthesis; L-arginine biosynthesis; L-arginine from L-ornithine and carbamoyl phosphate: step 2/3. In Shewanella piezotolerans (strain WP3 / JCM 13877), this protein is Argininosuccinate synthase.